We begin with the raw amino-acid sequence, 356 residues long: Phenylalanine--tRNA ligase alpha subunit (356 aa).

Glu-260 is a Mg(2+) binding site.

Belongs to the class-II aminoacyl-tRNA synthetase family. Phe-tRNA synthetase alpha subunit type 1 subfamily. Tetramer of two alpha and two beta subunits. Mg(2+) is required as a cofactor.

The protein localises to the cytoplasm. It carries out the reaction tRNA(Phe) + L-phenylalanine + ATP = L-phenylalanyl-tRNA(Phe) + AMP + diphosphate + H(+). In Gluconacetobacter diazotrophicus (strain ATCC 49037 / DSM 5601 / CCUG 37298 / CIP 103539 / LMG 7603 / PAl5), this protein is Phenylalanine--tRNA ligase alpha subunit.